Here is a 64-residue protein sequence, read N- to C-terminus: Large ribosomal subunit protein uL29 (64 aa).

Belongs to the universal ribosomal protein uL29 family.

This is Large ribosomal subunit protein uL29 from Verminephrobacter eiseniae (strain EF01-2).